A 365-amino-acid polypeptide reads, in one-letter code: Peptide chain release factor 2 (365 aa).

Gln-252 is modified (N5-methylglutamine).

It belongs to the prokaryotic/mitochondrial release factor family. Methylated by PrmC. Methylation increases the termination efficiency of RF2.

Its subcellular location is the cytoplasm. Peptide chain release factor 2 directs the termination of translation in response to the peptide chain termination codons UGA and UAA. The sequence is that of Peptide chain release factor 2 from Shewanella baltica (strain OS223).